The following is a 376-amino-acid chain: uncharacterized protein (376 aa).

Positions 1-22 are cleaved as a signal peptide; the sequence is MVATGRIIITLLAAALDEIILA.

Belongs to the ascovirus HvAV ORF17 family.

This is an uncharacterized protein from Heliothis virescens ascovirus 3e (HvAV-3e).